The primary structure comprises 423 residues: MLDTLLINIGQLLTMDQEDGLLRREAMNTLPVIENGAVGIENGVITFVGTAEEAKGLQAREVIDCGGKMVSPGLVDPHTHLVFGGSRENEIALKLQGVPYLEILEQGGGILATVNATKQASKEELVQKAKFHLDRMLSFGVTTVEAKSGYGLDDETEWKQLEATAQLQKEHPVDIVSTFLGAHAVPKEYKGRSKEFLQWMLDLLPEMKEKQLAEFVDIFCETGVFSVEESKEFLLKAKELGFDVKIHADEIDPLGGAEAAAEIGAASADHLVGASDKGIEMLANSNTVATLLPGTTFYLNKESFARGRKMIDEGVAVALATDFNPGSCPTENIQLIMSIAMLKLKMTPEEVWNAVTVNSSYAINRGDVAGKIRVGRKADLVLWDAYNYAYVPYHYGVSHVNTVWKNGNIAYTRGEQSWSTATI.

Positions 78 and 80 each coordinate Fe(3+). Positions 78 and 80 each coordinate Zn(2+). Residues Arg87, Tyr150, and His183 each coordinate 4-imidazolone-5-propanoate. Residue Tyr150 coordinates N-formimidoyl-L-glutamate. A Fe(3+)-binding site is contributed by His247. His247 is a binding site for Zn(2+). Glu250 contributes to the 4-imidazolone-5-propanoate binding site. Asp322 contacts Fe(3+). Asp322 serves as a coordination point for Zn(2+). N-formimidoyl-L-glutamate contacts are provided by Asn324 and Gly326. Ser327 provides a ligand contact to 4-imidazolone-5-propanoate.

It belongs to the metallo-dependent hydrolases superfamily. HutI family. The cofactor is Zn(2+). Fe(3+) serves as cofactor.

The protein resides in the cytoplasm. The enzyme catalyses 4-imidazolone-5-propanoate + H2O = N-formimidoyl-L-glutamate. Its pathway is amino-acid degradation; L-histidine degradation into L-glutamate; N-formimidoyl-L-glutamate from L-histidine: step 3/3. Its function is as follows. Catalyzes the hydrolytic cleavage of the carbon-nitrogen bond in imidazolone-5-propanoate to yield N-formimidoyl-L-glutamate. It is the third step in the universal histidine degradation pathway. This Bacillus cereus (strain B4264) protein is Imidazolonepropionase.